The following is a 582-amino-acid chain: Trans-ocimene synthase, chloroplastic (582 aa).

A chloroplast-targeting transit peptide spans 1 to 35; the sequence is MSLIIQSLPHWSRIPPRPPQLSQFQNSSRPKPLIQ. (2E)-geranyl diphosphate contacts are provided by R296, D333, D337, R474, and D477. Residues D333 and D337 each coordinate Mg(2+). A DDXXD motif motif is present at residues 333-337; it reads DDIYD. Residues D477, T481, and E485 each contribute to the Mg(2+) site.

Belongs to the terpene synthase family. Tpsb subfamily. In terms of assembly, monomer. The cofactor is Mg(2+). It depends on Mn(2+) as a cofactor. As to expression, expressed in male and female leaves. Barely detectable in fruits and shoots.

The protein resides in the plastid. It is found in the chloroplast. It carries out the reaction (2E)-geranyl diphosphate = (E)-beta-ocimene + diphosphate. It functions in the pathway secondary metabolite biosynthesis; terpenoid biosynthesis. Monoterpene synthase (TPS) involved in the biosynthesis of monoterpene natural products used by traditional Chinese medicine to treat headache, inflammation and intoxication. Catalyzes the conversion of (2E)-geranyl diphosphate (GPP) into (E)-beta-ocimene. This is Trans-ocimene synthase, chloroplastic from Litsea cubeba (Aromatic litsea).